A 1026-amino-acid polypeptide reads, in one-letter code: Multidrug resistance protein MdtC (1026 aa).

The next 12 helical transmembrane spans lie at 12-32, 333-353, 360-380, 387-407, 431-451, 463-483, 528-548, 853-873, 875-895, 897-917, 953-973, and 984-1004; these read VATL…FRLL, EVEQ…FLFL, AIPA…MYLC, LSLM…IVVL, VGFT…PLLL, FAVT…TLTP, WVLL…ISIP, LLLI…LYES, VHPL…LLAL, WFGA…IGIV, PIMM…LTSG, and ITIV…TPVV.

This sequence belongs to the resistance-nodulation-cell division (RND) (TC 2.A.6) family. MdtC subfamily. Part of a tripartite efflux system composed of MdtA, MdtB and MdtC. MdtC forms a heteromultimer with MdtB.

The protein localises to the cell inner membrane. The protein is Multidrug resistance protein MdtC of Pectobacterium carotovorum subsp. carotovorum (strain PC1).